A 346-amino-acid polypeptide reads, in one-letter code: uncharacterized protein (346 aa).

Belongs to the MG067/MG068/MG395 family.

This is an uncharacterized protein from Mycoplasma pneumoniae (strain ATCC 29342 / M129 / Subtype 1) (Mycoplasmoides pneumoniae).